A 153-amino-acid polypeptide reads, in one-letter code: D-aminoacyl-tRNA deacylase (153 aa).

A Gly-cisPro motif, important for rejection of L-amino acids motif is present at residues 142–143; sequence GP.

Belongs to the DTD family. Homodimer.

The protein resides in the cytoplasm. The catalysed reaction is glycyl-tRNA(Ala) + H2O = tRNA(Ala) + glycine + H(+). It carries out the reaction a D-aminoacyl-tRNA + H2O = a tRNA + a D-alpha-amino acid + H(+). Functionally, an aminoacyl-tRNA editing enzyme that deacylates mischarged D-aminoacyl-tRNAs. Also deacylates mischarged glycyl-tRNA(Ala), protecting cells against glycine mischarging by AlaRS. Acts via tRNA-based rather than protein-based catalysis; rejects L-amino acids rather than detecting D-amino acids in the active site. By recycling D-aminoacyl-tRNA to D-amino acids and free tRNA molecules, this enzyme counteracts the toxicity associated with the formation of D-aminoacyl-tRNA entities in vivo and helps enforce protein L-homochirality. In Cupriavidus necator (strain ATCC 17699 / DSM 428 / KCTC 22496 / NCIMB 10442 / H16 / Stanier 337) (Ralstonia eutropha), this protein is D-aminoacyl-tRNA deacylase.